A 301-amino-acid polypeptide reads, in one-letter code: Phosphatidylserine decarboxylase proenzyme (301 aa).

Active-site charge relay system; for autoendoproteolytic cleavage activity residues include Asp-117, His-173, and Ser-260. Ser-260 serves as the catalytic Schiff-base intermediate with substrate; via pyruvic acid; for decarboxylase activity. The residue at position 260 (Ser-260) is a Pyruvic acid (Ser); by autocatalysis.

It belongs to the phosphatidylserine decarboxylase family. PSD-B subfamily. Prokaryotic type II sub-subfamily. As to quaternary structure, heterodimer of a large membrane-associated beta subunit and a small pyruvoyl-containing alpha subunit. Pyruvate serves as cofactor. Post-translationally, is synthesized initially as an inactive proenzyme. Formation of the active enzyme involves a self-maturation process in which the active site pyruvoyl group is generated from an internal serine residue via an autocatalytic post-translational modification. Two non-identical subunits are generated from the proenzyme in this reaction, and the pyruvate is formed at the N-terminus of the alpha chain, which is derived from the carboxyl end of the proenzyme. The autoendoproteolytic cleavage occurs by a canonical serine protease mechanism, in which the side chain hydroxyl group of the serine supplies its oxygen atom to form the C-terminus of the beta chain, while the remainder of the serine residue undergoes an oxidative deamination to produce ammonia and the pyruvoyl prosthetic group on the alpha chain. During this reaction, the Ser that is part of the protease active site of the proenzyme becomes the pyruvoyl prosthetic group, which constitutes an essential element of the active site of the mature decarboxylase.

The protein resides in the cell membrane. It catalyses the reaction a 1,2-diacyl-sn-glycero-3-phospho-L-serine + H(+) = a 1,2-diacyl-sn-glycero-3-phosphoethanolamine + CO2. The protein operates within phospholipid metabolism; phosphatidylethanolamine biosynthesis; phosphatidylethanolamine from CDP-diacylglycerol: step 2/2. In terms of biological role, catalyzes the formation of phosphatidylethanolamine (PtdEtn) from phosphatidylserine (PtdSer). In Chlamydia trachomatis serovar L2 (strain ATCC VR-902B / DSM 19102 / 434/Bu), this protein is Phosphatidylserine decarboxylase proenzyme.